A 248-amino-acid chain; its full sequence is 2,3-bisphosphoglycerate-dependent phosphoglycerate mutase (248 aa).

Residues 8-15 (RHGESTWN), 21-22 (TG), R60, 87-90 (ERHY), K98, 114-115 (RR), and 183-184 (GN) each bind substrate. H9 serves as the catalytic Tele-phosphohistidine intermediate. E87 (proton donor/acceptor) is an active-site residue.

It belongs to the phosphoglycerate mutase family. BPG-dependent PGAM subfamily. In terms of assembly, homodimer.

It catalyses the reaction (2R)-2-phosphoglycerate = (2R)-3-phosphoglycerate. Its pathway is carbohydrate degradation; glycolysis; pyruvate from D-glyceraldehyde 3-phosphate: step 3/5. In terms of biological role, catalyzes the interconversion of 2-phosphoglycerate and 3-phosphoglycerate. The polypeptide is 2,3-bisphosphoglycerate-dependent phosphoglycerate mutase (Burkholderia lata (strain ATCC 17760 / DSM 23089 / LMG 22485 / NCIMB 9086 / R18194 / 383)).